Here is a 573-residue protein sequence, read N- to C-terminus: DNA ligase (573 aa).

Glu250 provides a ligand contact to ATP. Lys252 (N6-AMP-lysine intermediate) is an active-site residue. ATP contacts are provided by Arg257, Arg272, Glu301, Phe342, Arg432, and Lys438.

This sequence belongs to the ATP-dependent DNA ligase family. Mg(2+) serves as cofactor.

It catalyses the reaction ATP + (deoxyribonucleotide)n-3'-hydroxyl + 5'-phospho-(deoxyribonucleotide)m = (deoxyribonucleotide)n+m + AMP + diphosphate.. Its function is as follows. DNA ligase that seals nicks in double-stranded DNA during DNA replication, DNA recombination and DNA repair. The chain is DNA ligase from Methanococcus maripaludis (strain C7 / ATCC BAA-1331).